A 269-amino-acid polypeptide reads, in one-letter code: 4-hydroxy-tetrahydrodipicolinate reductase (269 aa).

Residues 8-13 and Glu34 contribute to the NAD(+) site; that span reads GAAGRM. Arg35 lines the NADP(+) pocket. NAD(+) contacts are provided by residues 98–100 and 122–125; these read GTT and APNY. Residue His155 is the Proton donor/acceptor of the active site. His156 provides a ligand contact to (S)-2,3,4,5-tetrahydrodipicolinate. Residue Lys159 is the Proton donor of the active site. A (S)-2,3,4,5-tetrahydrodipicolinate-binding site is contributed by 165-166; it reads GT.

Belongs to the DapB family.

The protein resides in the cytoplasm. It catalyses the reaction (S)-2,3,4,5-tetrahydrodipicolinate + NAD(+) + H2O = (2S,4S)-4-hydroxy-2,3,4,5-tetrahydrodipicolinate + NADH + H(+). It carries out the reaction (S)-2,3,4,5-tetrahydrodipicolinate + NADP(+) + H2O = (2S,4S)-4-hydroxy-2,3,4,5-tetrahydrodipicolinate + NADPH + H(+). Its pathway is amino-acid biosynthesis; L-lysine biosynthesis via DAP pathway; (S)-tetrahydrodipicolinate from L-aspartate: step 4/4. Catalyzes the conversion of 4-hydroxy-tetrahydrodipicolinate (HTPA) to tetrahydrodipicolinate. The polypeptide is 4-hydroxy-tetrahydrodipicolinate reductase (Vibrio cholerae serotype O1 (strain ATCC 39315 / El Tor Inaba N16961)).